Here is a 172-residue protein sequence, read N- to C-terminus: Adenine phosphoribosyltransferase (172 aa).

The protein belongs to the purine/pyrimidine phosphoribosyltransferase family. Homodimer.

The protein resides in the cytoplasm. The catalysed reaction is AMP + diphosphate = 5-phospho-alpha-D-ribose 1-diphosphate + adenine. It participates in purine metabolism; AMP biosynthesis via salvage pathway; AMP from adenine: step 1/1. In terms of biological role, catalyzes a salvage reaction resulting in the formation of AMP, that is energically less costly than de novo synthesis. The polypeptide is Adenine phosphoribosyltransferase (Staphylococcus carnosus (strain TM300)).